A 487-amino-acid polypeptide reads, in one-letter code: Mu-like prophage FluMu tail sheath protein (487 aa).

The protein belongs to the myoviridae tail sheath protein family.

Major component of the tail. In Haemophilus influenzae (strain ATCC 51907 / DSM 11121 / KW20 / Rd), this protein is Mu-like prophage FluMu tail sheath protein.